Here is a 126-residue protein sequence, read N- to C-terminus: Protein ApaG (126 aa).

In terms of domain architecture, ApaG spans 2–126; the sequence is RRKPYELKVE…FSLAIPRRLH (125 aa).

The chain is Protein ApaG from Methylococcus capsulatus (strain ATCC 33009 / NCIMB 11132 / Bath).